Here is a 367-residue protein sequence, read N- to C-terminus: Peptide chain release factor 2 (367 aa).

Gln254 carries the N5-methylglutamine modification.

It belongs to the prokaryotic/mitochondrial release factor family. Post-translationally, methylated by PrmC. Methylation increases the termination efficiency of RF2.

The protein resides in the cytoplasm. In terms of biological role, peptide chain release factor 2 directs the termination of translation in response to the peptide chain termination codons UGA and UAA. The protein is Peptide chain release factor 2 of Leptospira interrogans serogroup Icterohaemorrhagiae serovar Lai (strain 56601).